A 68-amino-acid chain; its full sequence is Large ribosomal subunit protein uL30 (68 aa).

This sequence belongs to the universal ribosomal protein uL30 family. In terms of assembly, part of the 50S ribosomal subunit.

In Agrobacterium fabrum (strain C58 / ATCC 33970) (Agrobacterium tumefaciens (strain C58)), this protein is Large ribosomal subunit protein uL30.